We begin with the raw amino-acid sequence, 256 residues long: 5'-nucleotidase SurE (256 aa).

A divalent metal cation is bound by residues aspartate 8, aspartate 9, serine 39, and asparagine 91.

This sequence belongs to the SurE nucleotidase family. A divalent metal cation is required as a cofactor.

Its subcellular location is the cytoplasm. It carries out the reaction a ribonucleoside 5'-phosphate + H2O = a ribonucleoside + phosphate. Nucleotidase that shows phosphatase activity on nucleoside 5'-monophosphates. The polypeptide is 5'-nucleotidase SurE (Marinobacter nauticus (strain ATCC 700491 / DSM 11845 / VT8) (Marinobacter aquaeolei)).